Consider the following 228-residue polypeptide: Orotidine 5'-phosphate decarboxylase (228 aa).

Substrate-binding positions include Asp-10, Lys-33, Asp-60 to Thr-69, Thr-116, Arg-178, Gln-187, Gly-207, and Arg-208. Lys-62 (proton donor) is an active-site residue.

This sequence belongs to the OMP decarboxylase family. Type 1 subfamily. Homodimer.

It carries out the reaction orotidine 5'-phosphate + H(+) = UMP + CO2. Its pathway is pyrimidine metabolism; UMP biosynthesis via de novo pathway; UMP from orotate: step 2/2. Functionally, catalyzes the decarboxylation of orotidine 5'-monophosphate (OMP) to uridine 5'-monophosphate (UMP). This is Orotidine 5'-phosphate decarboxylase from Oenococcus oeni (strain ATCC BAA-331 / PSU-1).